Here is a 601-residue protein sequence, read N- to C-terminus: Elongation factor 4 (601 aa).

One can recognise a tr-type G domain in the interval Ser-6–Glu-188. Residues Asp-18 to Thr-23 and Asn-135 to Asp-138 contribute to the GTP site.

This sequence belongs to the TRAFAC class translation factor GTPase superfamily. Classic translation factor GTPase family. LepA subfamily.

The protein localises to the cell inner membrane. It catalyses the reaction GTP + H2O = GDP + phosphate + H(+). Required for accurate and efficient protein synthesis under certain stress conditions. May act as a fidelity factor of the translation reaction, by catalyzing a one-codon backward translocation of tRNAs on improperly translocated ribosomes. Back-translocation proceeds from a post-translocation (POST) complex to a pre-translocation (PRE) complex, thus giving elongation factor G a second chance to translocate the tRNAs correctly. Binds to ribosomes in a GTP-dependent manner. This Anaeromyxobacter dehalogenans (strain 2CP-1 / ATCC BAA-258) protein is Elongation factor 4.